Reading from the N-terminus, the 121-residue chain is Large ribosomal subunit protein bL20 (121 aa).

This sequence belongs to the bacterial ribosomal protein bL20 family.

Its function is as follows. Binds directly to 23S ribosomal RNA and is necessary for the in vitro assembly process of the 50S ribosomal subunit. It is not involved in the protein synthesizing functions of that subunit. The chain is Large ribosomal subunit protein bL20 from Mycoplasma mycoides subsp. mycoides SC (strain CCUG 32753 / NCTC 10114 / PG1).